Reading from the N-terminus, the 490-residue chain is Glutamyl-tRNA(Gln) amidotransferase subunit A (490 aa).

Catalysis depends on charge relay system residues Lys78 and Ser159. Residue Ser183 is the Acyl-ester intermediate of the active site.

Belongs to the amidase family. GatA subfamily. Heterotrimer of A, B and C subunits.

It catalyses the reaction L-glutamyl-tRNA(Gln) + L-glutamine + ATP + H2O = L-glutaminyl-tRNA(Gln) + L-glutamate + ADP + phosphate + H(+). Its function is as follows. Allows the formation of correctly charged Gln-tRNA(Gln) through the transamidation of misacylated Glu-tRNA(Gln) in organisms which lack glutaminyl-tRNA synthetase. The reaction takes place in the presence of glutamine and ATP through an activated gamma-phospho-Glu-tRNA(Gln). The chain is Glutamyl-tRNA(Gln) amidotransferase subunit A from Paramagnetospirillum magneticum (strain ATCC 700264 / AMB-1) (Magnetospirillum magneticum).